Reading from the N-terminus, the 101-residue chain is Small ribosomal subunit protein uS14 (101 aa).

It belongs to the universal ribosomal protein uS14 family. In terms of assembly, part of the 30S ribosomal subunit. Contacts proteins S3 and S10.

In terms of biological role, binds 16S rRNA, required for the assembly of 30S particles and may also be responsible for determining the conformation of the 16S rRNA at the A site. In Marinobacter nauticus (strain ATCC 700491 / DSM 11845 / VT8) (Marinobacter aquaeolei), this protein is Small ribosomal subunit protein uS14.